Here is a 156-residue protein sequence, read N- to C-terminus: Small ribosomal subunit protein uS7c (156 aa).

Belongs to the universal ribosomal protein uS7 family. As to quaternary structure, part of the 30S ribosomal subunit.

Its subcellular location is the plastid. The protein resides in the chloroplast. Its function is as follows. One of the primary rRNA binding proteins, it binds directly to 16S rRNA where it nucleates assembly of the head domain of the 30S subunit. This is Small ribosomal subunit protein uS7c (rps7) from Chara vulgaris (Common stonewort).